The primary structure comprises 272 residues: Glycosylphosphatidylinositol anchor biosynthesis protein 11 (272 aa).

A compositionally biased stretch (polar residues) spans 21 to 31; it reads QSTSTTKSTPG. A disordered region spans residues 21–48; that stretch reads QSTSTTKSTPGSQATESSTTTAGSSSSL. The segment covering 32–48 has biased composition (low complexity); sequence SQATESSTTTAGSSSSL. A run of 5 helical transmembrane segments spans residues 91–111, 145–165, 177–197, 215–235, and 248–268; these read VMLN…LLCL, LLAS…MVLF, FLCA…VHGV, TFGG…PIPL, and ILCG…TLFW.

This sequence belongs to the PIGF family.

It localises to the endoplasmic reticulum membrane. The protein operates within glycolipid biosynthesis; glycosylphosphatidylinositol-anchor biosynthesis. Its function is as follows. Acts in the GPI biosynthetic pathway between GlcNAc-PI synthesis and GPI transfer to protein. In Neurospora crassa (strain ATCC 24698 / 74-OR23-1A / CBS 708.71 / DSM 1257 / FGSC 987), this protein is Glycosylphosphatidylinositol anchor biosynthesis protein 11 (gpi-11).